A 479-amino-acid chain; its full sequence is GTPase Der (479 aa).

EngA-type G domains are found at residues 3–167 and 208–383; these read FKVA…GEAR and MRIA…KVWN. GTP contacts are provided by residues 9–16, 56–60, 119–122, 214–221, 261–265, and 326–329; these read GRPNVGKS, DTAGF, NKAE, GRPNAGKS, DTAGM, and NKWD. Residues 384–468 enclose the KH-like domain; it reads SRVSTGKLNR…PIRIALRTSD (85 aa).

The protein belongs to the TRAFAC class TrmE-Era-EngA-EngB-Septin-like GTPase superfamily. EngA (Der) GTPase family. Associates with the 50S ribosomal subunit.

In terms of biological role, GTPase that plays an essential role in the late steps of ribosome biogenesis. The polypeptide is GTPase Der (Mesorhizobium japonicum (strain LMG 29417 / CECT 9101 / MAFF 303099) (Mesorhizobium loti (strain MAFF 303099))).